Consider the following 89-residue polypeptide: HssA/B-like protein 21 (89 aa).

It belongs to the hssA/B family.

This is HssA/B-like protein 21 (hssl21) from Dictyostelium discoideum (Social amoeba).